The sequence spans 128 residues: Lymphocyte antigen 6D (128 aa).

An N-terminal signal peptide occupies residues 1-20 (MRTALLLLAALAVATGPALT). A UPAR/Ly6 domain is found at 21-108 (LRCHVCTSSS…AAPTRTALAH (88 aa)). 5 disulfides stabilise this stretch: cysteine 23–cysteine 45, cysteine 26–cysteine 32, cysteine 38–cysteine 63, cysteine 67–cysteine 86, and cysteine 87–cysteine 92. Asparagine 98 carries the GPI-anchor amidated asparagine lipid modification. Positions 99 to 128 (AAPTRTALAHSALSLGLALSLLAVILAPSL) are cleaved as a propeptide — removed in mature form.

In terms of tissue distribution, expressed exclusively at the outer cell surface of transitional epithelia and the keratinocyte of stratified squamous epithelia.

The protein localises to the cell membrane. May act as a specification marker at earliest stage specification of lymphocytes between B- and T-cell development. Marks the earliest stage of B-cell specification. The sequence is that of Lymphocyte antigen 6D (LY6D) from Homo sapiens (Human).